A 170-amino-acid chain; its full sequence is Co-chaperone protein HscB homolog (170 aa).

The 75-residue stretch at 5–79 folds into the J domain; that stretch reads DHFSLFGLPA…RARYLCEQAG (75 aa).

Belongs to the HscB family. In terms of assembly, interacts with HscA and stimulates its ATPase activity.

Functionally, co-chaperone involved in the maturation of iron-sulfur cluster-containing proteins. Seems to help targeting proteins to be folded toward HscA. The chain is Co-chaperone protein HscB homolog from Bordetella parapertussis (strain 12822 / ATCC BAA-587 / NCTC 13253).